We begin with the raw amino-acid sequence, 115 residues long: Non-specific lipid-transfer protein Cw18 (115 aa).

The N-terminal stretch at 1–25 (MARTAATKLALVALVAAMLLVAADA) is a signal peptide. 4 disulfides stabilise this stretch: Cys29–Cys77, Cys39–Cys54, Cys55–Cys97, and Cys75–Cys111.

Belongs to the plant LTP family. In terms of tissue distribution, highly expressed in leaves and coleoptiles. No expression in roots.

In terms of biological role, plant non-specific lipid-transfer proteins transfer phospholipids as well as galactolipids across membranes. May play a role in wax or cutin deposition in the cell walls of expanding epidermal cells and certain secretory tissues. This Hordeum vulgare (Barley) protein is Non-specific lipid-transfer protein Cw18 (CW18).